Consider the following 638-residue polypeptide: Threonine--tRNA ligase (638 aa).

The TGS domain occupies 1–62; the sequence is MYQLTLPDKS…EKNSNIEVLT (62 aa). Residues 246–537 form a catalytic region; it reads DHRKIGKEMD…LIEHYEGKFP (292 aa). Residues Cys337, His388, and His514 each coordinate Zn(2+).

Belongs to the class-II aminoacyl-tRNA synthetase family. In terms of assembly, homodimer. Requires Zn(2+) as cofactor.

It is found in the cytoplasm. The catalysed reaction is tRNA(Thr) + L-threonine + ATP = L-threonyl-tRNA(Thr) + AMP + diphosphate + H(+). Catalyzes the attachment of threonine to tRNA(Thr) in a two-step reaction: L-threonine is first activated by ATP to form Thr-AMP and then transferred to the acceptor end of tRNA(Thr). Also edits incorrectly charged L-seryl-tRNA(Thr). This chain is Threonine--tRNA ligase, found in Leptospira interrogans serogroup Icterohaemorrhagiae serovar copenhageni (strain Fiocruz L1-130).